An 80-amino-acid polypeptide reads, in one-letter code: uncharacterized protein (80 aa).

Positions 1 to 20 (MVAADHRALGSNKSYPASQT) are cleaved as a signal peptide. Positions 1–21 (MVAADHRALGSNKSYPASQTA) are disordered. Residues 11-21 (SNKSYPASQTA) are compositionally biased toward polar residues.

This is an uncharacterized protein from Mycobacterium tuberculosis (strain CDC 1551 / Oshkosh).